Reading from the N-terminus, the 626-residue chain is Trehalase (626 aa).

Residues Met-1–Ala-35 form the signal peptide. Over Glu-36–Thr-595 the chain is Extracellular. Asn-104 is a glycosylation site (N-linked (GlcNAc...) asparagine). Substrate is bound by residues Arg-181, Trp-188–Asp-189, Asn-225, and Arg-234–Gln-236. An N-linked (GlcNAc...) asparagine glycan is attached at Asn-274. Residues Arg-299–Glu-301 and Gly-333 contribute to the substrate site. Asp-335 serves as the catalytic Proton donor/acceptor. Asn-350, Asn-384, Asn-498, and Asn-525 each carry an N-linked (GlcNAc...) asparagine glycan. Glu-532 functions as the Proton donor/acceptor in the catalytic mechanism. Glu-547 provides a ligand contact to substrate. The chain crosses the membrane as a helical span at residues Ala-596 to Gly-616. Over Lys-617–Gln-626 the chain is Cytoplasmic.

The protein belongs to the glycosyl hydrolase 37 family. In terms of assembly, monomer. Glycosylated; contains 3.1% carbohydrates.

It is found in the membrane. The catalysed reaction is alpha,alpha-trehalose + H2O = alpha-D-glucose + beta-D-glucose. Inhibited by sodium, potassium and ammonium ions, and by TEMED. The polypeptide is Trehalase (Apis mellifera (Honeybee)).